A 357-amino-acid polypeptide reads, in one-letter code: Popeye domain-containing protein 1 (357 aa).

Residues 1-38 are Extracellular-facing; the sequence is MDTTAISPLTPLGVIPDLKNATSVPFNETACENWKEIH. 2 N-linked (GlcNAc...) asparagine glycosylation sites follow: Asn-20 and Asn-27. Residues 39-59 form a helical membrane-spanning segment; that stretch reads HLVFHVANICFAAGLVIPTTL. At 60–62 the chain is on the cytoplasmic side; that stretch reads NLH. Residues 63–83 traverse the membrane as a helical segment; sequence MIFLRGLLTVGCALFIIWATL. Over 84-89 the chain is Extracellular; that stretch reads YRCALD. The chain crosses the membrane as a helical span at residues 90–110; it reads IMIWNSVFLVVNLLHFIYLVY. Residues 111–357 lie on the Cytoplasmic side of the membrane; it reads KRRPIKIEKE…AEKLELQRLP (247 aa). Low complexity predominate over residues 309 to 323; that stretch reads GTSSSSSLRPGRTSP. Residues 309-357 are disordered; it reads GTSSSSSLRPGRTSPYLRTSAKMKPIEESVEDDVFEAPSAEKLELQRLP. Residues 347–357 are compositionally biased toward basic and acidic residues; the sequence is SAEKLELQRLP.

This sequence belongs to the popeye family. In terms of assembly, homodimer. Homodimerization requires the C-terminus cytoplasmic region. As to expression, expressed in the heart and skeletal muscle (at protein level). Isoform 1 and isoform 4: expressed in heart, muscle, brain, stomach, kidney, lung and spleen.

Its subcellular location is the lateral cell membrane. The protein localises to the cell junction. It localises to the tight junction. The protein resides in the membrane. It is found in the cell membrane. Its subcellular location is the sarcolemma. The protein localises to the caveola. Functionally, cell adhesion molecule involved in the establishment and/or maintenance of cell integrity. Involved in the formation and regulation of the tight junction (TJ) paracellular permeability barrier in epithelial cells. Induces primordial adhesive contact and aggregation of epithelial cells in a Ca(2+)-independent manner. Involved in epithelial movement during corneal sheet formation and regeneration. May play a role in VAMP3-mediated vesicular transport and recycling of receptor molecules. May play a role in the regulation of cell shape and movement by modulating the Rho-GTPase activity. May be involved in skeletal muscle and heart development as well as in the maintenance of heart function. May also be involved in striated muscle regeneration and in the regulation of cell spreading. The sequence is that of Popeye domain-containing protein 1 (POPDC1) from Gallus gallus (Chicken).